Consider the following 292-residue polypeptide: NAD kinase (292 aa).

Asp-73 functions as the Proton acceptor in the catalytic mechanism. Residues 73 to 74 (DG), 147 to 148 (NE), His-158, Arg-175, Asp-177, 188 to 193 (TAYSLS), and Gln-247 contribute to the NAD(+) site.

It belongs to the NAD kinase family. It depends on a divalent metal cation as a cofactor.

It is found in the cytoplasm. It carries out the reaction NAD(+) + ATP = ADP + NADP(+) + H(+). Involved in the regulation of the intracellular balance of NAD and NADP, and is a key enzyme in the biosynthesis of NADP. Catalyzes specifically the phosphorylation on 2'-hydroxyl of the adenosine moiety of NAD to yield NADP. This chain is NAD kinase, found in Pectobacterium atrosepticum (strain SCRI 1043 / ATCC BAA-672) (Erwinia carotovora subsp. atroseptica).